The chain runs to 822 residues: Anaphase-promoting complex subunit 2 (822 aa).

Residues Ser-218, Ser-314, Ser-470, Ser-534, and Ser-697 each carry the phosphoserine modification. The tract at residues 450 to 495 is disordered; it reads GDLAVELSKTDPASLETGQDSEDDSGEPEDWVPDPVDADPGKSSSK. Residues 468 to 481 are compositionally biased toward acidic residues; the sequence is QDSEDDSGEPEDWV. The interval 502–700 is cullin homology; the sequence is ISLLVSIYGS…LLRRRMSVWL (199 aa). Tyr-810 bears the Phosphotyrosine mark.

The protein belongs to the cullin family. As to quaternary structure, the mammalian APC/C is composed at least of 14 distinct subunits ANAPC1, ANAPC2, CDC27/APC3, ANAPC4, ANAPC5, CDC16/APC6, ANAPC7, CDC23/APC8, ANAPC10, ANAPC11, CDC26/APC12, ANAPC13, ANAPC15 and ANAPC16 that assemble into a complex of at least 19 chains with a combined molecular mass of around 1.2 MDa; APC/C interacts with FZR1 and FBXO5. In the context of the APC/C complex, directly interacts with UBE2C and UBE2S. Interacts (via cullin domain) with ANAPC11 and with UBCH10. Interacts with NEUROD2. Interacts with FBXO43; the interaction is direct.

It functions in the pathway protein modification; protein ubiquitination. In terms of biological role, together with the RING-H2 protein ANAPC11, constitutes the catalytic component of the anaphase promoting complex/cyclosome (APC/C), a cell cycle-regulated E3 ubiquitin ligase that controls progression through mitosis and the G1 phase of the cell cycle. The APC/C complex acts by mediating ubiquitination and subsequent degradation of target proteins: it mainly mediates the formation of 'Lys-11'-linked polyubiquitin chains and, to a lower extent, the formation of 'Lys-48'- and 'Lys-63'-linked polyubiquitin chains. The APC/C complex catalyzes assembly of branched 'Lys-11'-/'Lys-48'-linked branched ubiquitin chains on target proteins. The CDC20-APC/C complex positively regulates the formation of synaptic vesicle clustering at active zone to the presynaptic membrane in postmitotic neurons. CDC20-APC/C-induced degradation of NEUROD2 drives presynaptic differentiation. The polypeptide is Anaphase-promoting complex subunit 2 (ANAPC2) (Homo sapiens (Human)).